A 62-amino-acid polypeptide reads, in one-letter code: Potassium channel toxin alpha-KTx 6.21 (62 aa).

Residues 1 to 24 (MNAKLIYLLLVVTTMMLTFDTTQA) form the signal peptide. 4 cysteine pairs are disulfide-bonded: Cys-29–Cys-50, Cys-35–Cys-55, Cys-39–Cys-57, and Cys-45–Cys-60. Val-61 carries the post-translational modification Valine amide.

It belongs to the short scorpion toxin superfamily. Potassium channel inhibitor family. Alpha-KTx 06 subfamily. Post-translationally, C-terminal amidation is important for activity. There is a 50-70-fold decrease in ability to inhibit Kv1.2/KCNA2 when the toxin is not amidated. This decrease may be explained by a 23-fold slower association rate (k(on)) together with a 2-fold faster dissociation rate (k(off)). As to expression, expressed by the venom gland.

The protein localises to the secreted. Reversible blocker of voltage-gated potassium channels with fast binding and unbinding kinetics. Has highest activity on human voltage-gated potassium channel Kv1.2/KCNA2 channels (IC(50)=0.11-0.16 nM), whereas its affinity for other channels tested was in the nanomolar range (hKv1.1/KCNA1, IC(50)=253 nM; hKv1.3/KCNA3, IC(50)=91 nM; and hKCa3.1/KCNN4, IC(50)=70 nM). The sequence is that of Potassium channel toxin alpha-KTx 6.21 from Urodacus yaschenkoi (Inland robust scorpion).